The sequence spans 236 residues: 2,3,4,5-tetrahydropyridine-2,6-dicarboxylate N-acetyltransferase (236 aa).

This sequence belongs to the transferase hexapeptide repeat family. DapH subfamily.

The enzyme catalyses (S)-2,3,4,5-tetrahydrodipicolinate + acetyl-CoA + H2O = L-2-acetamido-6-oxoheptanedioate + CoA. It functions in the pathway amino-acid biosynthesis; L-lysine biosynthesis via DAP pathway; LL-2,6-diaminopimelate from (S)-tetrahydrodipicolinate (acetylase route): step 1/3. Functionally, catalyzes the transfer of an acetyl group from acetyl-CoA to tetrahydrodipicolinate. This chain is 2,3,4,5-tetrahydropyridine-2,6-dicarboxylate N-acetyltransferase, found in Bacillus velezensis (strain DSM 23117 / BGSC 10A6 / LMG 26770 / FZB42) (Bacillus amyloliquefaciens subsp. plantarum).